Reading from the N-terminus, the 272-residue chain is Phosphate import ATP-binding protein PstB 1 (272 aa).

An ABC transporter domain is found at 26-267 (ITIENLDLHY…PMKKQTEDYI (242 aa)). ATP is bound at residue 58-65 (GPSGCGKS).

The protein belongs to the ABC transporter superfamily. Phosphate importer (TC 3.A.1.7) family. The complex is composed of two ATP-binding proteins (PstB), two transmembrane proteins (PstC and PstA) and a solute-binding protein (PstS).

It localises to the cell inner membrane. It carries out the reaction phosphate(out) + ATP + H2O = ADP + 2 phosphate(in) + H(+). In terms of biological role, part of the ABC transporter complex PstSACB involved in phosphate import. Responsible for energy coupling to the transport system. The sequence is that of Phosphate import ATP-binding protein PstB 1 from Vibrio vulnificus (strain YJ016).